The chain runs to 273 residues: 3-methyl-2-oxobutanoate hydroxymethyltransferase (273 aa).

The Mg(2+) site is built by aspartate 49 and aspartate 88. Residues 49 to 50 (DS), aspartate 88, and lysine 118 each bind 3-methyl-2-oxobutanoate. Glutamate 120 contacts Mg(2+). Catalysis depends on glutamate 187, which acts as the Proton acceptor.

It belongs to the PanB family. In terms of assembly, homodecamer; pentamer of dimers. The cofactor is Mg(2+).

The protein resides in the cytoplasm. It catalyses the reaction 3-methyl-2-oxobutanoate + (6R)-5,10-methylene-5,6,7,8-tetrahydrofolate + H2O = 2-dehydropantoate + (6S)-5,6,7,8-tetrahydrofolate. It functions in the pathway cofactor biosynthesis; (R)-pantothenate biosynthesis; (R)-pantoate from 3-methyl-2-oxobutanoate: step 1/2. In terms of biological role, catalyzes the reversible reaction in which hydroxymethyl group from 5,10-methylenetetrahydrofolate is transferred onto alpha-ketoisovalerate to form ketopantoate. The protein is 3-methyl-2-oxobutanoate hydroxymethyltransferase of Sinorhizobium fredii (strain NBRC 101917 / NGR234).